Reading from the N-terminus, the 77-residue chain is Conotoxin PnMKLT1-0122 (77 aa).

Positions 1-22 (MKLTCMMIVAVLFLTAWTFATA) are cleaved as a signal peptide. Positions 23–49 (EDPRNGLENLFSKAHHEMKNPEDSKLN) are excised as a propeptide. Cystine bridges form between Cys-52-Cys-67, Cys-59-Cys-71, and Cys-66-Cys-76.

Belongs to the conotoxin O1 superfamily. In terms of tissue distribution, expressed by the venom duct.

It localises to the secreted. The chain is Conotoxin PnMKLT1-0122 from Conus pennaceus (Feathered cone).